Reading from the N-terminus, the 2785-residue chain is MTYFFIYVSTERACSLNNCTIAKRIGKGKDATVIFEHFRKPVDPFVQENCPCKALNSEMGPFSSDTSSSYGNVQNGNNSVLEAYNRQTENSSNLRDASQVYTHNSGFSFIPTGNTASGNGDLFSVTYLRSILSSISAAFPSHNNTGSSTVITSKLIKDPRLMKREQSMRNKSDTAGLSDVLPLDKSLGCGDSQIKLTCMPTSSISSSEVPADNTITSCLNASCFKFSSESSHYQAHNSSSKGHDCIASSSIAVTEQFKEQHSSSFPSSLSNAFSDVRKQKHSEEQVQRAQMRSNVPVLTALSSESRNSDESENTCSNDSQGHFSQESPSSDINSIYKVGHQMSTVFPAQKKGNLCEYIQDTGMMRASISTEDSTKDGVNHTWCKETVLSNETVSSPIDNSNTLYQEHKEGGNLNSLSGNCEKIGVTHKLQVPKFPISSTGDKNELYRAALELECSLTPTIECLSQKYPQHSLEHEDNTNFAMTQGLIELKTVQNNQNFGNILSDAFQEAKDVPLASEKLIDRVISSAAIDISLDSSVCNIIGEYTCVRRENENGEASPYNCHKEEASRVKDGVQDHSLSYDAELSCDLNLKINLQEQRDDKNPNEAKEHNTDNINGSEKQDCLANDHFTNIVEMREIKSNTEVEILNSEECFTFNSFRGKNGKPAETASSESEAVEQRHAPNDQRGLEHLVSSFPEIEGSSVCVASNATKQIVGTTVLTVSTSLGDHQKDELKEICSSESSDLGLVKHSISECEIDTDKDKLQDFHQLVNENSALKTGLGSEIEVDLEHDNASVFQQNMHSQGNDLCEEFELYESLKSRIDWEGLFGSSYEEIESSSFARREGTDQHSSTECNCVSFCSQDKRELHNPIFLPDLQVTITNLLSLRISPTDESLELKDNFYKQVTESTEPETNKEGNASGFGMCSQPSGENSSFSCANKFGNSVQESGDVSKSESSHSSNSSHNTHVDQGSGKPNNDSLSTEPSNVTVMNDKSKCPTKSKPVFNDTRNKKDMQSRSSKRTLHASSSRGQNIANKDLREHETHEKKRRPTSHGSSDRFSSLSQGRIKTFSQSEKHIRNVLNILNNEASLCKSKHLSRKLNKAVLHLKKAHRRVHTSLQLISKVGQKRKGPLPKAYAVIHNNFWESCDHQGDSLMSERRYSKHFLSKRKYDKQGDKRFLRFDIEESLTPVSKHRLYRTNRERIAECLSNEVMSGHVSSSLTTFHVREFCDEEQFPEPQLPLAYTSQSISQLEYTNSIVGNESSSELEHFSETSGNMLDPKETLTEKEYQTHTQLCNSDSAKLKNHTTHSIRDIAKECNSEDKTVLCESNPVYLSFIKENTSHSPDKSYDSNCKANTDIHISVLGSKKKHILSVDIYEQDNCVSDGVKSGEAIFPIEKCTVPMETTSSIPTENIASKSYTIPPVSSILVTAGEEESSVGENGLFDVNENEMNITMHSKLDLTSVTEESKICKKNMKNLSCNDSSMLLKENITGPSKRYMAKYIEEEKIRKIEQAVYKKIITEGSPISFKYKSQNKILKEKSFHVNKKIITNNLTDSHLSIKNSTVDTIALKDIPNQLKERKEAGQIKVNNNSHSDCLSKPAIVETNHRPVLHGNPKVATLQKELKEHRSPNYTSHVTELSQILQRADEAASLQILEEETKLCQNILPLFVQAFERQQECSIDQILISRKLLVEQNLWNNCRLKLKPCAVDTWVELQMAMETIQFIENKKRFLEGKPTFRSLLWYDESLYSELLRRPRGYQLQSNFYPGFQGRLKYNAFCELQNYHNQLVEFLTETKKENNSYYALLKYKRQINECEAIMKHYSDCFDFCLSVPFACGVNFGDSLGDLETLRKSTLKLISVPGGSPKVHSYPGKKDHLWIIIEIVSSKVSFIKSNEEISIKICLYGLEHIYFDAAKSLVWKEKSCSLPKKHSEKNREMEEINERAFSKLKKIYDVLSKGLNNEPTSIGLQEDAIIASKQSTLGSISNCRLNKAWLSYPDISCVGEILDQAKSADLEELQGLTLRCTDHLEILKKYFQMLQEDNIDNIFIMEENVLDMLSNHNLGAVILKPEAIEIYIEIVMISETIHYLKNLIAKKLHNQRFRGMLWFDWSLLPELIGCQEEVVSLSVGDTQTHCLWKLVETAISVLKKELAVIYEYGEASNCSYALHLFYRELKELTGVKRLLNNSKYSVSTYIDLVPHTASVNFGNTVAELEHNYKQFFLLLKNVMSVPQKDFGKMVHIIKVMKTIEHMKLLSAKDTKLSTHLLFLQMLRNKRNALQQNRQEKMETPVTEPGEDSSQPGVSEQTPPGTECTVKNISDSSKKRPVTADTCEVSQGKGNTDTVPSWKKQKVTMKDVGNIQTVSKHPSTTGSPPNDENKIGSNSSDSLKSISASPEVVKRQSSVLGSVSPAESVQDTCTPKSESKVEPTDSLPDSLASLTEQQENSNVIEKRNGNSSVAETNDKKDCPLVTCDQKDIDASYSPDHTPAQESHKTPVDHTQISPSNLTAGNDDPLVPDASLLSVSASQSEKDVYLSGTDFHHENNKILNLSTEDCTGTSSPEPVCIKDKISVLQVDKTQPIKSESPKKSMTDAPNPNTAPFGSYGNSALNVNGTVQHTHSEQNSKVLTQKVGTSRNIPPQSACSPVHNSSAHSFGTSYPYYSWCFYQYSSSNGTAVTHTYQGMTAYEIQQPPPPVLTTVASTVQSTHFNRSYSEHFSYFPGQPQANSFNPGNGYFPSHTPVSYNYQQPVYSQFASHQPVPQATYPYPPNPGAPPQVPWTYAPWQQNPFLRRP.

Residues 262–274 (SSSFPSSLSNAFS) are compositionally biased toward low complexity. 8 disordered regions span residues 262-331 (SSSF…PSSD), 596-620 (EQRD…SEKQ), 661-683 (NGKP…APND), 904-924 (TEST…GMCS), 943-1064 (VQES…QGRI), 2276-2458 (NRQE…TNDK), 2470-2511 (DIDA…LVPD), and 2571-2601 (TQPI…GNSA). Positions 275-286 (DVRKQKHSEEQV) are enriched in basic and acidic residues. Over residues 314–331 (TCSNDSQGHFSQESPSSD) the composition is skewed to polar residues. Residues 596–611 (EQRDDKNPNEAKEHNT) show a composition bias toward basic and acidic residues. 2 stretches are compositionally biased toward polar residues: residues 962 to 989 (HNTH…TVMN) and 1021 to 1031 (HASSSRGQNIA). The segment covering 1033–1042 (KDLREHETHE) has biased composition (basic and acidic residues). Composition is skewed to polar residues over residues 1049–1064 (SHGS…QGRI), 2291–2314 (DSSQ…NISD), 2327–2338 (EVSQGKGNTDTV), 2353–2387 (NIQT…SISA), 2394–2415 (RQSS…CTPK), 2431–2454 (ASLT…SVAE), 2491–2502 (DHTQISPSNLTA), and 2585–2601 (DAPN…GNSA).

The protein belongs to the TEX15 family. As to quaternary structure, interacts with PIWIL4. Interacts with PIWIL2. In terms of tissue distribution, detected in testis and ovary, and at lower levels in lung and brain.

Its subcellular location is the cytoplasm. The protein resides in the nucleus. In terms of biological role, required during spermatogenesis for normal chromosome synapsis and meiotic recombination in germ cells. Necessary for formation of DMC1 and RAD51 foci on meiotic chromosomes, suggesting a specific role in DNA double-stranded break repair. Essential executor of PIWIL4-piRNA pathway directed transposon DNA methylation and silencing in the male embryonic germ cells. PIWIL4-piRNA binds to nascent transposon transcripts and interacts with TEX15, which may in turn recruit the epigenetic silencing machinery to the transposon loci. Not required for piRNA biosynthesis. This chain is Testis-expressed protein 15, found in Mus musculus (Mouse).